Consider the following 721-residue polypeptide: Exo beta-1,2-glucooligosaccharide sophorohydrolase (non-reducing end) (721 aa).

Residues 1 to 18 (MKHIALLTTLLLSASLQA) form the signal peptide. In terms of domain architecture, Glycoamylase-like spans 474–708 (NHKLIGWNET…LLWNLFMSHP (235 aa)).

Monomer.

It localises to the periplasm. The catalysed reaction is [(1-&gt;2)-beta-D-glucosyl](n) + H2O = [(1-&gt;2)-beta-D-glucosyl](n-2) + sophorose. Its function is as follows. Catalyzes the hydrolysis of linear beta-1,2-glucan and beta-1,2-glucooligosaccharides with degrees of polymerization (DPs) greater than or equal to 4, to produce sophorose. The best substrates are tetra- and pentasaccharides. Acts as an exo-type enzyme that releases sophorose from the non-reducing end of the substrate. It cannot hydrolyze cyclic beta-1,2-glucans. The protein is Exo beta-1,2-glucooligosaccharide sophorohydrolase (non-reducing end) of Parabacteroides distasonis (strain ATCC 8503 / DSM 20701 / CIP 104284 / JCM 5825 / NCTC 11152).